The chain runs to 296 residues: Magnetosome protein MamB (296 aa).

Residues 1 to 12 (MKFENCRDCREE) lie on the Cytoplasmic side of the membrane. Residues 1–214 (MKFENCRDCR…GLMDSSVDTE (214 aa)) form a transmembrane domain (TMD) region. A helical transmembrane segment spans residues 13-33 (VVWWAFTADICMTLFKGVLGL). The Lumenal portion of the chain corresponds to 34-83 (MSGSVALVADSLHSGADVVASGVTQLSLKISNKPADERYPFGYGNIQYIS). Residues 84–104 (SSIVGSLLLIGASFLMYGSVM) traverse the membrane as a helical segment. At 105–112 (KLISGTYE) the chain is on the cytoplasmic side. A helical membrane pass occupies residues 113 to 133 (APSIFAAVGASVTVIVNELMY). The Lumenal portion of the chain corresponds to 134-164 (RYQICVGNENNSPAIIANAWDNRSDAISSAA). Residues 165–185 (VMVGVIASVIGFPIADTIAAI) traverse the membrane as a helical segment. Topologically, residues 186–296 (GVSALVGRIG…SPAPAAAARA (111 aa)) are cytoplasmic. Residues 215–296 (LLQTAWQVAM…SPAPAAAARA (82 aa)) are C-terminal domain (CTD).

This sequence belongs to the cation diffusion facilitator (CDF) transporter (TC 2.A.4) family. Forms heterodimers with MamM. Probably interacts with MamE.

The protein resides in the magnetosome membrane. Functionally, plays a dual, essential role in magnetosome formation; required for magnetosome vesicle formation as well as biomineralization. Probably binds and transports iron. Requires heterodimerization with MamM for stability. The protein is Magnetosome protein MamB (mamB) of Paramagnetospirillum magneticum (strain ATCC 700264 / AMB-1) (Magnetospirillum magneticum).